A 603-amino-acid polypeptide reads, in one-letter code: Polypeptide N-acetylgalactosaminyltransferase 10 (603 aa).

Residues M1–A11 are Cytoplasmic-facing. A helical; Signal-anchor for type II membrane protein membrane pass occupies residues V12 to Y31. Residues R32–N603 lie on the Lumenal side of the membrane. A disordered region spans residues G38 to Q59. Residues A45–S55 are compositionally biased toward low complexity. N-linked (GlcNAc...) asparagine glycans are attached at residues N124 and N146. Cystine bridges form between C135–C365, C356–C432, C471–C488, C523–C538, and C563–C578. Residues L144 to R253 are catalytic subdomain A. The substrate site is built by H154, E156, D185, and R214. Position 237 (D237) interacts with Mn(2+). S238 contacts substrate. H239 contacts Mn(2+). Positions P311–R373 are catalytic subdomain B. A substrate-binding site is contributed by W342. H370 contributes to the Mn(2+) binding site. Positions 373 and 378 each coordinate substrate. Residues R373–V384 form a flexible loop region. The region spanning A458–E590 is the Ricin B-type lectin domain. Residue N593 is glycosylated (N-linked (GlcNAc...) asparagine).

This sequence belongs to the glycosyltransferase 2 family. GalNAc-T subfamily. Requires Mn(2+) as cofactor. As to expression, widely expressed. Expressed at high level in small intestine, and at intermediate levels in stomach, pancreas, ovary, thyroid gland and spleen. Weakly expressed in other tissues.

Its subcellular location is the golgi apparatus membrane. It catalyses the reaction L-seryl-[protein] + UDP-N-acetyl-alpha-D-galactosamine = a 3-O-[N-acetyl-alpha-D-galactosaminyl]-L-seryl-[protein] + UDP + H(+). It carries out the reaction L-threonyl-[protein] + UDP-N-acetyl-alpha-D-galactosamine = a 3-O-[N-acetyl-alpha-D-galactosaminyl]-L-threonyl-[protein] + UDP + H(+). The protein operates within protein modification; protein glycosylation. Its function is as follows. Catalyzes the initial reaction in O-linked oligosaccharide biosynthesis, the transfer of an N-acetyl-D-galactosamine residue to a serine or threonine residue on the protein receptor. Has activity toward Muc5Ac and EA2 peptide substrates. The chain is Polypeptide N-acetylgalactosaminyltransferase 10 (GALNT10) from Homo sapiens (Human).